Consider the following 108-residue polypeptide: Nucleoid-associated protein Mmwyl1_2533 (108 aa).

The interval 1-22 is disordered; the sequence is MFKGGMGNMMRQAQQMQENMQK. Residues 11-22 show a composition bias toward polar residues; that stretch reads RQAQQMQENMQK.

It belongs to the YbaB/EbfC family. As to quaternary structure, homodimer.

Its subcellular location is the cytoplasm. It localises to the nucleoid. Its function is as follows. Binds to DNA and alters its conformation. May be involved in regulation of gene expression, nucleoid organization and DNA protection. This is Nucleoid-associated protein Mmwyl1_2533 from Marinomonas sp. (strain MWYL1).